Here is a 98-residue protein sequence, read N- to C-terminus: NADH-ubiquinone oxidoreductase chain 4L (98 aa).

3 consecutive transmembrane segments (helical) span residues 1–21 (MTSINLNLTMAFSLALTGVLV), 28–48 (STLLCLEGMMLSLFILMALLI), and 59–79 (APLILLVFSACEAGVGLALLV).

The protein belongs to the complex I subunit 4L family. As to quaternary structure, core subunit of respiratory chain NADH dehydrogenase (Complex I) which is composed of 45 different subunits.

The protein resides in the mitochondrion inner membrane. It carries out the reaction a ubiquinone + NADH + 5 H(+)(in) = a ubiquinol + NAD(+) + 4 H(+)(out). Core subunit of the mitochondrial membrane respiratory chain NADH dehydrogenase (Complex I) which catalyzes electron transfer from NADH through the respiratory chain, using ubiquinone as an electron acceptor. Part of the enzyme membrane arm which is embedded in the lipid bilayer and involved in proton translocation. The protein is NADH-ubiquinone oxidoreductase chain 4L (MT-ND4L) of Dactylopsila trivirgata (Striped possum).